The chain runs to 143 residues: Nucleoside diphosphate kinase (143 aa).

The ATP site is built by K11, F59, R87, T93, R104, and N114. Residue H117 is the Pros-phosphohistidine intermediate of the active site.

This sequence belongs to the NDK family. Homotetramer. Mg(2+) serves as cofactor.

The protein resides in the cytoplasm. It carries out the reaction a 2'-deoxyribonucleoside 5'-diphosphate + ATP = a 2'-deoxyribonucleoside 5'-triphosphate + ADP. The enzyme catalyses a ribonucleoside 5'-diphosphate + ATP = a ribonucleoside 5'-triphosphate + ADP. In terms of biological role, major role in the synthesis of nucleoside triphosphates other than ATP. The ATP gamma phosphate is transferred to the NDP beta phosphate via a ping-pong mechanism, using a phosphorylated active-site intermediate. The polypeptide is Nucleoside diphosphate kinase (Shewanella oneidensis (strain ATCC 700550 / JCM 31522 / CIP 106686 / LMG 19005 / NCIMB 14063 / MR-1)).